Reading from the N-terminus, the 407-residue chain is Phosphopentomutase (407 aa).

Positions 10, 306, 311, 347, 348, and 359 each coordinate Mn(2+).

This sequence belongs to the phosphopentomutase family. Requires Mn(2+) as cofactor.

Its subcellular location is the cytoplasm. The enzyme catalyses 2-deoxy-alpha-D-ribose 1-phosphate = 2-deoxy-D-ribose 5-phosphate. It carries out the reaction alpha-D-ribose 1-phosphate = D-ribose 5-phosphate. It participates in carbohydrate degradation; 2-deoxy-D-ribose 1-phosphate degradation; D-glyceraldehyde 3-phosphate and acetaldehyde from 2-deoxy-alpha-D-ribose 1-phosphate: step 1/2. Isomerase that catalyzes the conversion of deoxy-ribose 1-phosphate (dRib-1-P) and ribose 1-phosphate (Rib-1-P) to deoxy-ribose 5-phosphate (dRib-5-P) and ribose 5-phosphate (Rib-5-P), respectively. The sequence is that of Phosphopentomutase from Yersinia pestis bv. Antiqua (strain Antiqua).